The following is a 59-amino-acid chain: Embryonic testis differentiation protein homolog C (59 aa).

Residues 1–22 (MDKELPKASPSEPALNIKKSGK) are disordered.

The protein is Embryonic testis differentiation protein homolog C of Homo sapiens (Human).